Reading from the N-terminus, the 137-residue chain is Large ribosomal subunit protein uL16 (137 aa).

Belongs to the universal ribosomal protein uL16 family. As to quaternary structure, part of the 50S ribosomal subunit.

Its function is as follows. Binds 23S rRNA and is also seen to make contacts with the A and possibly P site tRNAs. The chain is Large ribosomal subunit protein uL16 from Nitratidesulfovibrio vulgaris (strain ATCC 29579 / DSM 644 / CCUG 34227 / NCIMB 8303 / VKM B-1760 / Hildenborough) (Desulfovibrio vulgaris).